Consider the following 312-residue polypeptide: HPr kinase/phosphorylase (312 aa).

Catalysis depends on residues His-139 and Lys-160. ATP is bound at residue 154–161; it reads GSSGVGKS. Ser-161 is a Mg(2+) binding site. Asp-178 serves as the catalytic Proton acceptor; for phosphorylation activity. Proton donor; for dephosphorylation activity. Residues 202 to 211 form an important for the catalytic mechanism of both phosphorylation and dephosphorylation region; the sequence is LEIRGLGIIN. Glu-203 provides a ligand contact to Mg(2+). Arg-244 is an active-site residue. The tract at residues 265–270 is important for the catalytic mechanism of dephosphorylation; the sequence is PVRPGR.

This sequence belongs to the HPrK/P family. As to quaternary structure, homohexamer. Mg(2+) is required as a cofactor.

It catalyses the reaction [HPr protein]-L-serine + ATP = [HPr protein]-O-phospho-L-serine + ADP + H(+). The enzyme catalyses [HPr protein]-O-phospho-L-serine + phosphate + H(+) = [HPr protein]-L-serine + diphosphate. In terms of biological role, catalyzes the ATP- as well as the pyrophosphate-dependent phosphorylation of a specific serine residue in HPr, a phosphocarrier protein of the phosphoenolpyruvate-dependent sugar phosphotransferase system (PTS). HprK/P also catalyzes the pyrophosphate-producing, inorganic phosphate-dependent dephosphorylation (phosphorolysis) of seryl-phosphorylated HPr (P-Ser-HPr). The two antagonistic activities of HprK/P are regulated by several intracellular metabolites, which change their concentration in response to the absence or presence of rapidly metabolisable carbon sources (glucose, fructose, etc.) in the growth medium. Therefore, by controlling the phosphorylation state of HPr, HPrK/P is a sensor enzyme that plays a major role in the regulation of carbon metabolism and sugar transport: it mediates carbon catabolite repression (CCR), and regulates PTS-catalyzed carbohydrate uptake and inducer exclusion. This chain is HPr kinase/phosphorylase, found in Listeria welshimeri serovar 6b (strain ATCC 35897 / DSM 20650 / CCUG 15529 / CIP 8149 / NCTC 11857 / SLCC 5334 / V8).